Reading from the N-terminus, the 107-residue chain is U1-lycotoxin-Ls1b (107 aa).

Positions 1-20 (MMKALVVVALLVTLISYSSS) are cleaved as a signal peptide. Residues 21–41 (EGIDDLEADELLSLMANEQTR) constitute a propeptide that is removed on maturation. Intrachain disulfides connect C44–C59, C51–C68, C58–C86, and C70–C84.

Belongs to the neurotoxin 19 (CSTX) family. 04 (U1-Lctx) subfamily. Expressed by the venom gland.

Its subcellular location is the secreted. The protein is U1-lycotoxin-Ls1b of Lycosa singoriensis (Wolf spider).